Reading from the N-terminus, the 210-residue chain is Large ribosomal subunit protein bL25 (210 aa).

The segment at 190-210 is disordered; that stretch reads LKSEGAEGGEAEAGQAEEGEE. Residues 196–210 are compositionally biased toward acidic residues; that stretch reads EGGEAEAGQAEEGEE.

The protein belongs to the bacterial ribosomal protein bL25 family. CTC subfamily. As to quaternary structure, part of the 50S ribosomal subunit; part of the 5S rRNA/L5/L18/L25 subcomplex. Contacts the 5S rRNA. Binds to the 5S rRNA independently of L5 and L18.

In terms of biological role, this is one of the proteins that binds to the 5S RNA in the ribosome where it forms part of the central protuberance. This is Large ribosomal subunit protein bL25 from Chelativorans sp. (strain BNC1).